Reading from the N-terminus, the 774-residue chain is MPKTTTRTPGRLSGKFWKLLGAATEKNQGRSLAQVKASADYETKAADLDDEQLRKAAELLRLEDLSESADIPQFLAIAREAAERSTSLRPFDVQLLGALRMLAGDVVEMATGEGKTLSGAIAAAGYALGGRSVHVITINDYLARRDAEWMGPLIEALGLTVGWITAESTAEERRRAYTCDVTYASVNEIGFDVLRDQLVTDVADLVSPNPDVALIDEADSVLVDEALVPLVLAGTSHRETPRVELIRMVGELTPGRDFDTDTDSRNVHLTDEGARKLEAKLGGIDLYSEEHVGTTLTEVNVALHAHVLLQRDVHYIVRDDAVHLINSSRGRIAQLQRWPDGLQAAVEAKEGIATTETGEVLDTITVQALINRYPTVCGMTGTALAAGEQLRQFYKLGVSPIEPNKPNIREDESDRVYVTAAAKIDAIIEHIEEVHKTGQPVLVGTHDVAESEELHEKLVKRGVPAVVLNAKNDAEEARVIAEAGKLGAVTVSTQMAGRGTDIRLGGSDEGDHDEVAELGGLHVVGTGRHNTQRLDNQLRGRAGRQGDPGSSVFFSSWEDELVQAHLEPNKRPMQADENGRVLTDKAAALLDHAQRVAEGRLLDVHANTWRYNQLTAQQRAIIVERRDALLRTPTAREELAELSPKRYAELAEELSEERLERICRLIMLYHLDRGWCEHLAYLADIRESIHLRALGRQNPLDEFHRMAVDAFASLAADAIEAAQQTFETAPSFEDEPGVDLSKLARPTSTWTYMVHDNPLADDTMAALSLPGVFR.

Residues Gln-94, 112–116 (GEGKT), and Asp-501 contribute to the ATP site.

Belongs to the SecA family. Monomer and homodimer. Part of the essential Sec protein translocation apparatus which comprises SecA, SecYEG and auxiliary proteins SecDF. Other proteins may also be involved.

It is found in the cell membrane. It localises to the cytoplasm. It carries out the reaction ATP + H2O + cellular proteinSide 1 = ADP + phosphate + cellular proteinSide 2.. Its function is as follows. Part of the Sec protein translocase complex. Interacts with the SecYEG preprotein conducting channel. Has a central role in coupling the hydrolysis of ATP to the transfer of proteins into and across the cell membrane, serving as an ATP-driven molecular motor driving the stepwise translocation of polypeptide chains across the membrane. The chain is Protein translocase subunit SecA 2 from Mycobacterium sp. (strain JLS).